Consider the following 450-residue polypeptide: MAGNYFGTDGIRGRANKFPMTAEIAMRVGMAAGLSFQRGSHRHRVVLGKDTRLSGYMIENAMVAGLCAAGMDVFLLGPIPTPAVAMLVRSLRADIGVMISASHNPYYDNGIKLFGPDGYKLSDEIEERIESMLDKDVELTLADSDGLGRAKRVDGVHDRYIEFAKRTLPRSMSLSGLRIVVDCANGAAYKVAPEALWELGAEVVAINIEPNGFNINKECGSTHPAGLQKKVHEVRADIGIALDGDADRVVIVDENGAIVDGDQIMAMIAESWHQSGRLAGGGVVSTVMSNLGLERFLGDMKLQLHRTKVGDRYVVEHMRAHGLNVGGEQSGHIVLSDFSTTGDGLVSALQVLACIKRQGRPVSELSKKFEPVPQLLKNVRIAGGKPLEEAPVKAAIEDARNRLGKAGRLVIRPSGTEPLIRVMAEGDDPQLVEAVVNDIVEVISETRSAA.

The active-site Phosphoserine intermediate is Ser-102. Ser-102, Asp-243, Asp-245, and Asp-247 together coordinate Mg(2+). Ser-102 is modified (phosphoserine).

The protein belongs to the phosphohexose mutase family. Requires Mg(2+) as cofactor. In terms of processing, activated by phosphorylation.

It catalyses the reaction alpha-D-glucosamine 1-phosphate = D-glucosamine 6-phosphate. In terms of biological role, catalyzes the conversion of glucosamine-6-phosphate to glucosamine-1-phosphate. This chain is Phosphoglucosamine mutase, found in Mesorhizobium japonicum (strain LMG 29417 / CECT 9101 / MAFF 303099) (Mesorhizobium loti (strain MAFF 303099)).